Consider the following 465-residue polypeptide: L-seryl-tRNA(Sec) selenium transferase (465 aa).

The residue at position 294 (Lys-294) is an N6-(pyridoxal phosphate)lysine.

It belongs to the SelA family. Pyridoxal 5'-phosphate is required as a cofactor.

The protein resides in the cytoplasm. The catalysed reaction is L-seryl-tRNA(Sec) + selenophosphate + H(+) = L-selenocysteinyl-tRNA(Sec) + phosphate. The protein operates within aminoacyl-tRNA biosynthesis; selenocysteinyl-tRNA(Sec) biosynthesis; selenocysteinyl-tRNA(Sec) from L-seryl-tRNA(Sec) (bacterial route): step 1/1. Functionally, converts seryl-tRNA(Sec) to selenocysteinyl-tRNA(Sec) required for selenoprotein biosynthesis. The chain is L-seryl-tRNA(Sec) selenium transferase from Maridesulfovibrio salexigens (strain ATCC 14822 / DSM 2638 / NCIMB 8403 / VKM B-1763) (Desulfovibrio salexigens).